The following is a 193-amino-acid chain: Ion-translocating oxidoreductase complex subunit A (193 aa).

6 consecutive transmembrane segments (helical) span residues 5 to 25 (LLLF…FLGL), 47 to 67 (FVMT…LIPL), 72 to 92 (LRTM…EMVV), 102 to 122 (LLGI…VALL), 134 to 154 (ALYG…FAAI), and 171 to 191 (AIAL…SGLV).

This sequence belongs to the NqrDE/RnfAE family. As to quaternary structure, the complex is composed of six subunits: RsxA, RsxB, RsxC, RsxD, RsxE and RsxG.

It is found in the cell inner membrane. Part of a membrane-bound complex that couples electron transfer with translocation of ions across the membrane. Required to maintain the reduced state of SoxR. The sequence is that of Ion-translocating oxidoreductase complex subunit A from Escherichia coli O45:K1 (strain S88 / ExPEC).